We begin with the raw amino-acid sequence, 36 residues long: Dermonecrotic toxin LgSicTox-beta-LOXN2 (36 aa).

It belongs to the arthropod phospholipase D family. Class II subfamily. It depends on Mg(2+) as a cofactor. Contains 2 disulfide bonds. In terms of tissue distribution, expressed by the venom gland.

It localises to the secreted. It carries out the reaction an N-(acyl)-sphingosylphosphocholine = an N-(acyl)-sphingosyl-1,3-cyclic phosphate + choline. It catalyses the reaction an N-(acyl)-sphingosylphosphoethanolamine = an N-(acyl)-sphingosyl-1,3-cyclic phosphate + ethanolamine. The enzyme catalyses a 1-acyl-sn-glycero-3-phosphocholine = a 1-acyl-sn-glycero-2,3-cyclic phosphate + choline. The catalysed reaction is a 1-acyl-sn-glycero-3-phosphoethanolamine = a 1-acyl-sn-glycero-2,3-cyclic phosphate + ethanolamine. Its function is as follows. Dermonecrotic toxins cleave the phosphodiester linkage between the phosphate and headgroup of certain phospholipids (sphingolipid and lysolipid substrates), forming an alcohol (often choline) and a cyclic phosphate. This toxin acts on sphingomyelin (SM). It may also act on ceramide phosphoethanolamine (CPE), lysophosphatidylcholine (LPC) and lysophosphatidylethanolamine (LPE), but not on lysophosphatidylserine (LPS), and lysophosphatidylglycerol (LPG). It acts by transphosphatidylation, releasing exclusively cyclic phosphate products as second products. Induces dermonecrosis, hemolysis, increased vascular permeability, edema, inflammatory response, and platelet aggregation. The protein is Dermonecrotic toxin LgSicTox-beta-LOXN2 of Loxosceles gaucho (Spider).